Reading from the N-terminus, the 273-residue chain is Major prion protein homolog (273 aa).

The N-terminal stretch at 1-24 (MARLLTTCCLLALLLAACTDVALS) is a signal peptide. Residues 25 to 121 (KKGKGKPSGG…QKPWKPPKTN (97 aa)) form a disordered region. Tandem repeats lie at residues 42-47 (RQPSYP), 48-53 (RQPGYP), 54-59 (HNPGYP), 60-65 (HNPGYP), 66-71 (HNPGYP), 72-77 (HNPGYP), 78-83 (HNPGYP), and 84-89 (QNPGYP). Residues 42-89 (RQPSYPRQPGYPHNPGYPHNPGYPHNPGYPHNPGYPHNPGYPQNPGYP) are 8 X 6 AA tandem repeats of [HR]-[NQ]-P-G-Y-P. A compositionally biased stretch (low complexity) spans 51-94 (GYPHNPGYPHNPGYPHNPGYPHNPGYPHNPGYPQNPGYPHNPGY). Positions 66, 72, and 78 each coordinate Cu(2+). His-90 and Gly-93 together coordinate Cu(2+). The segment covering 101 to 111 (YNPSSGGSYHN) has biased composition (polar residues). A disulfide bridge connects residues Cys-192 and Cys-237. Asn-194, Asn-209, and Asn-218 each carry an N-linked (GlcNAc...) asparagine glycan. The GPI-anchor amidated serine moiety is linked to residue Ser-248. A propeptide spans 249 to 273 (GIQLHPADTWLAVLLLLLTTLFAMH) (removed in mature form).

The protein belongs to the prion family. Monomer and homodimer. Has a tendency to aggregate into amyloid fibrils containing a cross-beta spine, formed by a steric zipper of superposed beta-strands. Soluble oligomers may represent an intermediate stage on the path to fibril formation. Copper binding may promote oligomerization. As to expression, spinal cord and brain.

The protein resides in the cell membrane. In terms of biological role, its primary physiological function is unclear. Has cytoprotective activity against internal or environmental stresses. May play a role in neuronal development and synaptic plasticity. May be required for neuronal myelin sheath maintenance. May play a role in iron uptake and iron homeostasis. Soluble oligomers are toxic to cultured neuroblastoma cells and induce apoptosis (in vitro). Association with GPC1 (via its heparan sulfate chains) targets PRNP to lipid rafts. Also provides Cu(2+) or Zn(2+) for the ascorbate-mediated GPC1 deaminase degradation of its heparan sulfate side chains. This chain is Major prion protein homolog (PRNP), found in Gallus gallus (Chicken).